The chain runs to 459 residues: Cobyrinate a,c-diamide synthase (459 aa).

A GATase cobBQ-type domain is found at 252 to 446 (TLALADDEAF…LHVHFAQRPE (195 aa)). Cys-334 acts as the Nucleophile in catalysis.

It belongs to the CobB/CbiA family. Monomer. Mg(2+) is required as a cofactor.

It catalyses the reaction cob(II)yrinate + 2 L-glutamine + 2 ATP + 2 H2O = cob(II)yrinate a,c diamide + 2 L-glutamate + 2 ADP + 2 phosphate + 2 H(+). It participates in cofactor biosynthesis; adenosylcobalamin biosynthesis; cob(II)yrinate a,c-diamide from sirohydrochlorin (anaerobic route): step 10/10. Functionally, catalyzes the ATP-dependent amidation of the two carboxylate groups at positions a and c of cobyrinate, using either L-glutamine or ammonia as the nitrogen source. Is able to use other nucleotide triphosphates as substrate, such as GTP or UTP, although less efficiently than ATP. This is Cobyrinate a,c-diamide synthase from Salmonella typhimurium (strain LT2 / SGSC1412 / ATCC 700720).